Reading from the N-terminus, the 390-residue chain is GTPase Obg (390 aa).

The Obg domain maps to 1 to 159 (MKFIDEALIR…RDLQLELMLL (159 aa)). The region spanning 160–333 (ADVGMLGLPN…LCRDIMDFIE (174 aa)) is the OBG-type G domain. Residues 166–173 (GLPNAGKS), 191–195 (FTTLV), 213–216 (DIPG), 283–286 (NKID), and 314–316 (SAV) contribute to the GTP site. Mg(2+)-binding residues include serine 173 and threonine 193. The interval 363–390 (DHQFEDEDEDWDDWSEEDEEGVETIYKP) is disordered. Residues 366–384 (FEDEDEDWDDWSEEDEEGV) are compositionally biased toward acidic residues.

It belongs to the TRAFAC class OBG-HflX-like GTPase superfamily. OBG GTPase family. Monomer. Mg(2+) serves as cofactor.

Its subcellular location is the cytoplasm. An essential GTPase which binds GTP, GDP and possibly (p)ppGpp with moderate affinity, with high nucleotide exchange rates and a fairly low GTP hydrolysis rate. Plays a role in control of the cell cycle, stress response, ribosome biogenesis and in those bacteria that undergo differentiation, in morphogenesis control. The protein is GTPase Obg of Pasteurella multocida (strain Pm70).